The following is a 185-amino-acid chain: ATP synthase subunit b, chloroplastic (185 aa).

The chain crosses the membrane as a helical span at residues 27-49 (LATNPINLSVVLGVLVFFGKGVL).

The protein belongs to the ATPase B chain family. In terms of assembly, F-type ATPases have 2 components, F(1) - the catalytic core - and F(0) - the membrane proton channel. F(1) has five subunits: alpha(3), beta(3), gamma(1), delta(1), epsilon(1). F(0) has four main subunits: a(1), b(1), b'(1) and c(10-14). The alpha and beta chains form an alternating ring which encloses part of the gamma chain. F(1) is attached to F(0) by a central stalk formed by the gamma and epsilon chains, while a peripheral stalk is formed by the delta, b and b' chains.

It is found in the plastid. The protein resides in the chloroplast thylakoid membrane. F(1)F(0) ATP synthase produces ATP from ADP in the presence of a proton or sodium gradient. F-type ATPases consist of two structural domains, F(1) containing the extramembraneous catalytic core and F(0) containing the membrane proton channel, linked together by a central stalk and a peripheral stalk. During catalysis, ATP synthesis in the catalytic domain of F(1) is coupled via a rotary mechanism of the central stalk subunits to proton translocation. Functionally, component of the F(0) channel, it forms part of the peripheral stalk, linking F(1) to F(0). This is ATP synthase subunit b, chloroplastic from Glycine max (Soybean).